The primary structure comprises 657 residues: Single-minded homolog 2 (657 aa).

Residues 1 to 53 (MKEKSKNAAKTRREKENGEFYELAKLLPLPSAITSQLDKASIIRLTTSYLKMR) form the bHLH domain. PAS domains lie at 77–147 (AKEL…PPLH) and 218–288 (PPSA…LVKG). The 71-residue stretch at 218–288 (PPSAITEIKL…YAHHLLLVKG (71 aa)) folds into the PAC domain. A Single-minded C-terminal domain is found at 336–657 (EYKELQLSLD…GASVIITNGR (322 aa)). The segment covering 354–364 (ESWRTTLSTSQ) has biased composition (polar residues). Disordered stretches follow at residues 354–387 (ESWR…NPYP) and 612–641 (LGSA…APGA). Residues 367–386 (RKSAKPKNTKMKTKLRTNPY) carry the Nuclear localization signal motif. A compositionally biased stretch (basic residues) spans 369–381 (SAKPKNTKMKTKL).

In terms of assembly, efficient DNA binding requires dimerization with another bHLH protein. Heterodimer of SIM2 and ARNT. As to expression, transcripts were detected in high levels in kidney followed by skeletal muscle and lung. Low levels were found in testis, brain and heart. In early fetal development it is found in CNS, developing kidney, tongue epithelium and cartilage primordia.

The protein localises to the nucleus. In terms of biological role, transcription factor that may be a master gene of CNS development in cooperation with Arnt. It may have pleiotropic effects in the tissues expressed during development. This chain is Single-minded homolog 2 (Sim2), found in Mus musculus (Mouse).